Here is a 317-residue protein sequence, read N- to C-terminus: Transaldolase (317 aa).

Catalysis depends on Lys125, which acts as the Schiff-base intermediate with substrate.

This sequence belongs to the transaldolase family. Type 1 subfamily. As to quaternary structure, homodimer.

It localises to the cytoplasm. The enzyme catalyses D-sedoheptulose 7-phosphate + D-glyceraldehyde 3-phosphate = D-erythrose 4-phosphate + beta-D-fructose 6-phosphate. The protein operates within carbohydrate degradation; pentose phosphate pathway; D-glyceraldehyde 3-phosphate and beta-D-fructose 6-phosphate from D-ribose 5-phosphate and D-xylulose 5-phosphate (non-oxidative stage): step 2/3. In terms of biological role, transaldolase is important for the balance of metabolites in the pentose-phosphate pathway. The sequence is that of Transaldolase from Delftia acidovorans (strain DSM 14801 / SPH-1).